The primary structure comprises 156 residues: Ribosomal RNA large subunit methyltransferase H (156 aa).

S-adenosyl-L-methionine-binding positions include leucine 73, glycine 104, and 123–128; that span reads LSDLTL.

The protein belongs to the RNA methyltransferase RlmH family. As to quaternary structure, homodimer.

The protein localises to the cytoplasm. It catalyses the reaction pseudouridine(1915) in 23S rRNA + S-adenosyl-L-methionine = N(3)-methylpseudouridine(1915) in 23S rRNA + S-adenosyl-L-homocysteine + H(+). Specifically methylates the pseudouridine at position 1915 (m3Psi1915) in 23S rRNA. In Leptothrix cholodnii (strain ATCC 51168 / LMG 8142 / SP-6) (Leptothrix discophora (strain SP-6)), this protein is Ribosomal RNA large subunit methyltransferase H.